A 152-amino-acid chain; its full sequence is UPF0756 membrane protein PEPE_1090 (152 aa).

The next 4 membrane-spanning stretches (helical) occupy residues 4–24 (WLFLIGIFIVALLGKNQSLII), 52–72 (WGVTIISITILVPIATGKIGF), 85–105 (WIAVACGILVSLLSYQGVGFL), and 115–135 (LVMGTIIGVVFMNGIAAGPII).

The protein belongs to the UPF0756 family.

Its subcellular location is the cell membrane. The sequence is that of UPF0756 membrane protein PEPE_1090 from Pediococcus pentosaceus (strain ATCC 25745 / CCUG 21536 / LMG 10740 / 183-1w).